The chain runs to 673 residues: UvrABC system protein B (673 aa).

In terms of domain architecture, Helicase ATP-binding spans 26–414 (EGLEDGLAHQ…GGDVVDQVVR (389 aa)). Position 39–46 (39–46 (GVTGSGKT)) interacts with ATP. A Beta-hairpin motif is present at residues 92 to 115 (YYDYYQPEAYVPSSDTFIEKDASV). Residues 431–597 (QVDDLLSEIR…GLNKKVVDIL (167 aa)) enclose the Helicase C-terminal domain. One can recognise a UVR domain in the interval 633-668 (LQKIHELEGLMMQHAQNLEFEEAAQIRDQLHQLREL).

It belongs to the UvrB family. As to quaternary structure, forms a heterotetramer with UvrA during the search for lesions. Interacts with UvrC in an incision complex.

Its subcellular location is the cytoplasm. Functionally, the UvrABC repair system catalyzes the recognition and processing of DNA lesions. A damage recognition complex composed of 2 UvrA and 2 UvrB subunits scans DNA for abnormalities. Upon binding of the UvrA(2)B(2) complex to a putative damaged site, the DNA wraps around one UvrB monomer. DNA wrap is dependent on ATP binding by UvrB and probably causes local melting of the DNA helix, facilitating insertion of UvrB beta-hairpin between the DNA strands. Then UvrB probes one DNA strand for the presence of a lesion. If a lesion is found the UvrA subunits dissociate and the UvrB-DNA preincision complex is formed. This complex is subsequently bound by UvrC and the second UvrB is released. If no lesion is found, the DNA wraps around the other UvrB subunit that will check the other stand for damage. The polypeptide is UvrABC system protein B (Shigella dysenteriae serotype 1 (strain Sd197)).